A 255-amino-acid chain; its full sequence is UPF0246 protein DP0358 (255 aa).

It belongs to the UPF0246 family.

This chain is UPF0246 protein DP0358, found in Desulfotalea psychrophila (strain LSv54 / DSM 12343).